We begin with the raw amino-acid sequence, 284 residues long: Tropomyosin (284 aa).

The interval methionine 1–threonine 39 is disordered. Residues methionine 1–tyrosine 284 adopt a coiled-coil conformation. The span at lysine 12–threonine 39 shows a compositional bias: basic and acidic residues.

This sequence belongs to the tropomyosin family. In terms of assembly, homodimer.

In terms of biological role, tropomyosin, in association with the troponin complex, plays a central role in the calcium dependent regulation of muscle contraction. In Homarus americanus (American lobster), this protein is Tropomyosin (TM1).